Here is a 307-residue protein sequence, read N- to C-terminus: Nicotinamide/nicotinic acid mononucleotide adenylyltransferase 2 (307 aa).

Serine 16 and phenylalanine 17 together coordinate NAD(+). Position 24 (histidine 24) interacts with ATP. NAD(+)-binding residues include tryptophan 92, threonine 95, glycine 200, aspartate 202, leucine 212, tryptophan 213, and arginine 232. Threonine 271–arginine 274 contacts ATP.

The protein belongs to the eukaryotic NMN adenylyltransferase family. As to quaternary structure, monomer. It depends on Mg(2+) as a cofactor.

It localises to the golgi apparatus membrane. The protein localises to the cytoplasmic vesicle membrane. The protein resides in the cytoplasm. It is found in the cell projection. Its subcellular location is the axon. The catalysed reaction is beta-nicotinamide D-ribonucleotide + ATP + H(+) = diphosphate + NAD(+). The enzyme catalyses nicotinate beta-D-ribonucleotide + ATP + H(+) = deamido-NAD(+) + diphosphate. It functions in the pathway cofactor biosynthesis; NAD(+) biosynthesis; NAD(+) from nicotinamide D-ribonucleotide: step 1/1. It participates in cofactor biosynthesis; NAD(+) biosynthesis; deamido-NAD(+) from nicotinate D-ribonucleotide: step 1/1. In terms of biological role, nicotinamide/nicotinate-nucleotide adenylyltransferase that acts as an axon maintenance factor. Axon survival factor required for the maintenance of healthy axons: acts by delaying Wallerian axon degeneration, an evolutionarily conserved process that drives the loss of damaged axons. Catalyzes the formation of NAD(+) from nicotinamide mononucleotide (NMN) and ATP. Can also use the deamidated form; nicotinic acid mononucleotide (NaMN) as substrate but with a lower efficiency. Also catalyzes the reverse reaction, i.e. the pyrophosphorolytic cleavage of NAD(+). For the pyrophosphorolytic activity prefers NAD(+), NADH and NaAD as substrates and degrades nicotinic acid adenine dinucleotide phosphate (NHD) less effectively. Also acts as an activator of ADP-ribosylation by supporting the catalytic activity of PARP16 and promoting mono-ADP-ribosylation of ribosomes by PARP16. May be involved in the maintenance of axonal integrity. The sequence is that of Nicotinamide/nicotinic acid mononucleotide adenylyltransferase 2 (nmnat2) from Xenopus tropicalis (Western clawed frog).